Reading from the N-terminus, the 166-residue chain is Probable chemoreceptor glutamine deamidase CheD (166 aa).

It belongs to the CheD family.

The catalysed reaction is L-glutaminyl-[protein] + H2O = L-glutamyl-[protein] + NH4(+). Probably deamidates glutamine residues to glutamate on methyl-accepting chemotaxis receptors (MCPs), playing an important role in chemotaxis. In Oceanobacillus iheyensis (strain DSM 14371 / CIP 107618 / JCM 11309 / KCTC 3954 / HTE831), this protein is Probable chemoreceptor glutamine deamidase CheD.